Reading from the N-terminus, the 725-residue chain is Phosphoribosylformylglycinamidine synthase subunit PurL (725 aa).

His-34 is a catalytic residue. Tyr-37 is an ATP binding site. Glu-93 is a Mg(2+) binding site. Substrate is bound by residues 94 to 97 and Arg-116; that span reads SHNH. The active-site Proton acceptor is the His-95. Position 117 (Asp-117) interacts with Mg(2+). Residues 220 to 241 are disordered; it reads GASFASEDLSEDAETEDRPAVQ. Position 241 (Gln-241) interacts with substrate. Asp-269 is a Mg(2+) binding site. 313 to 315 serves as a coordination point for substrate; it reads ESQ. ATP is bound by residues Asp-489 and Gly-526. Residue Asn-527 participates in Mg(2+) binding. Residue Ser-529 coordinates substrate.

The protein belongs to the FGAMS family. Monomer. Part of the FGAM synthase complex composed of 1 PurL, 1 PurQ and 2 PurS subunits.

Its subcellular location is the cytoplasm. It carries out the reaction N(2)-formyl-N(1)-(5-phospho-beta-D-ribosyl)glycinamide + L-glutamine + ATP + H2O = 2-formamido-N(1)-(5-O-phospho-beta-D-ribosyl)acetamidine + L-glutamate + ADP + phosphate + H(+). Its pathway is purine metabolism; IMP biosynthesis via de novo pathway; 5-amino-1-(5-phospho-D-ribosyl)imidazole from N(2)-formyl-N(1)-(5-phospho-D-ribosyl)glycinamide: step 1/2. Its function is as follows. Part of the phosphoribosylformylglycinamidine synthase complex involved in the purines biosynthetic pathway. Catalyzes the ATP-dependent conversion of formylglycinamide ribonucleotide (FGAR) and glutamine to yield formylglycinamidine ribonucleotide (FGAM) and glutamate. The FGAM synthase complex is composed of three subunits. PurQ produces an ammonia molecule by converting glutamine to glutamate. PurL transfers the ammonia molecule to FGAR to form FGAM in an ATP-dependent manner. PurS interacts with PurQ and PurL and is thought to assist in the transfer of the ammonia molecule from PurQ to PurL. The protein is Phosphoribosylformylglycinamidine synthase subunit PurL of Haloquadratum walsbyi (strain DSM 16790 / HBSQ001).